The chain runs to 327 residues: MTIGSFFSSLLFWRNSQDQEAQRGRMQEIDLSVHTIKSHGGRVASKHKHDWIILVILIAIEIGLNLISPFYRYVGKDMMTDLKYPFKDNTVPIWSVPVYAVLLPIIVFVCFYLKRTCVYDLHHSILGLLFAVLITGVITDSIKVATGRPRPNFYWRCFPDGKELYDALGGVVCHGKAAEVKEGHKSFPSGHTSWSFAGLTFLSLYLSGKIKAFNNEGHVAKLCLVIFPLLAACLVGISRVDDYWHHWQDVFAGALIGTLVAAFCYRQFYPNPYHEEGWGPYAYFKAAQERGVPVTSSQNGDALRAMSLQMDSTSLENMESGTSTAPR.

The next 6 membrane-spanning stretches (helical) occupy residues 51 to 71 (WIILVILIAIEIGLNLISPFY), 93 to 113 (IWSVPVYAVLLPIIVFVCFYL), 118 to 138 (VYDLHHSILGLLFAVLITGVI), 187 to 207 (FPSGHTSWSFAGLTFLSLYLS), 217 to 237 (GHVAKLCLVIFPLLAACLVGI), and 244 to 264 (WHHWQDVFAGALIGTLVAAFC).

It belongs to the PA-phosphatase related phosphoesterase family. As to expression, strongly expressed in leaves, moderately in roots, weakly in floral hamps and flower buds, and not detected in adult flowers and seedpods.

Its subcellular location is the membrane. With respect to regulation, PA phosphatase activity inhibited by N-ethylmaleimide with an IC(50) value of 10 mM. In terms of biological role, plays a general role in cellular responses to stress, may be by attenuating the signal produced by phospholipases. Exhibits both diacylglycerol pyrophosphate (DGPP) phosphatase and phosphatidate (PA) phosphatase activities. Substrate preference is diacylglycerol pyrophosphate &gt; phosphatidate. This is Lipid phosphate phosphatase 1 (LPP1) from Arabidopsis thaliana (Mouse-ear cress).